The following is a 124-amino-acid chain: Aspartate 1-decarboxylase (124 aa).

The active-site Schiff-base intermediate with substrate; via pyruvic acid is Ser-21. Ser-21 is subject to Pyruvic acid (Ser). Substrate is bound at residue Thr-53. Tyr-54 acts as the Proton donor in catalysis. 69-71 lines the substrate pocket; sequence GAA.

This sequence belongs to the PanD family. As to quaternary structure, heterooctamer of four alpha and four beta subunits. The cofactor is pyruvate. In terms of processing, is synthesized initially as an inactive proenzyme, which is activated by self-cleavage at a specific serine bond to produce a beta-subunit with a hydroxyl group at its C-terminus and an alpha-subunit with a pyruvoyl group at its N-terminus.

The protein resides in the cytoplasm. It catalyses the reaction L-aspartate + H(+) = beta-alanine + CO2. Its pathway is cofactor biosynthesis; (R)-pantothenate biosynthesis; beta-alanine from L-aspartate: step 1/1. Functionally, catalyzes the pyruvoyl-dependent decarboxylation of aspartate to produce beta-alanine. In Dehalococcoides mccartyi (strain ATCC BAA-2266 / KCTC 15142 / 195) (Dehalococcoides ethenogenes (strain 195)), this protein is Aspartate 1-decarboxylase.